A 589-amino-acid chain; its full sequence is Oligo-1,6-glucosidase IMA2 (589 aa).

Asp215 serves as the catalytic Nucleophile. The active-site Proton donor is Glu277.

This sequence belongs to the glycosyl hydrolase 13 family.

It carries out the reaction Hydrolysis of (1-&gt;6)-alpha-D-glucosidic linkages in some oligosaccharides produced from starch and glycogen by alpha-amylase, and in isomaltose.. In terms of biological role, alpha-glucosidase with specificity for isomaltase, methyl-alpha-glucoside, and palatinose. This is Oligo-1,6-glucosidase IMA2 (IMA2) from Saccharomyces cerevisiae (strain ATCC 204508 / S288c) (Baker's yeast).